Here is an 87-residue protein sequence, read N- to C-terminus: Putative defensin-like protein 231 (87 aa).

The signal sequence occupies residues 1 to 26 (MKFATCFLVSYVLVFLVLSVCKEVEA). 4 disulfide bridges follow: C30–C85, C40–C66, C48–C79, and C64–C81.

Belongs to the DEFL family.

Its subcellular location is the secreted. The polypeptide is Putative defensin-like protein 231 (SCRL25) (Arabidopsis thaliana (Mouse-ear cress)).